The chain runs to 403 residues: MTVQVQDHDITTAADTAKLPQPMQPPLKQATYKTHTTDFIVNELLPLEFTGEGEHLWLHIQKSGMNTAYLAKLLSEWAEIPLRDVGFSGLKDRHALTTQWFSLRIPKKQLPDSEFAPVDISANESVTILEQQWHNKKLNRGTHRANQFIITLRDIEFASFEASLSLQISASEQPMSAKQAVEQHLTTISQSGVPNYFGPQRFGRSGNNIREALSLFARPVPESRPQPNKGKRKRVPREQNSMELSAARSLIFNEILAARVRDGSWNTGLAGEVFNLDGSGSIFASDEIDHTLRARLETGDIHPTAVLWGTSNEKVSGKAAAMETDIVAQSPLLMQLAVGLEQRDIKAQRRALRLPIEALSWEWEDKEDGQILVLNFTLTTGSFATSVLASLVQELITSSYSRS.

Residues 1–10 are compositionally biased toward basic and acidic residues; the sequence is MTVQVQDHDI. The disordered stretch occupies residues 1-24; sequence MTVQVQDHDITTAADTAKLPQPMQ. D92 acts as the Nucleophile in catalysis. The TRUD domain maps to 192–354; it reads GVPNYFGPQR…IKAQRRALRL (163 aa). The disordered stretch occupies residues 217–240; that stretch reads ARPVPESRPQPNKGKRKRVPREQN.

This sequence belongs to the pseudouridine synthase TruD family.

It carries out the reaction uridine(13) in tRNA = pseudouridine(13) in tRNA. In terms of biological role, responsible for synthesis of pseudouridine from uracil-13 in transfer RNAs. This Psychrobacter arcticus (strain DSM 17307 / VKM B-2377 / 273-4) protein is tRNA pseudouridine synthase D.